Consider the following 559-residue polypeptide: Kelch repeat and BTB domain-containing protein 2 (559 aa).

Residues 26 to 95 (CDVIITIGDG…LYNRHISSMN (70 aa)) form the BTB domain. Residues 128–223 (CIYIYHRLYE…CIDIQNLDKK (96 aa)) enclose the BACK domain. Kelch repeat units follow at residues 305-352 (EIII…VIDD), 353-399 (MIYA…VFDQ), and 401-463 (IYII…SHKD).

In terms of assembly, interacts (via BTB domain) with host CUL3.

It is found in the host cytoplasm. Probable substrate-specific adapter of CUL3-containing E3 ubiquitin-protein ligases which mediate the ubiquitination and subsequent proteasomal degradation of host target proteins. This is Kelch repeat and BTB domain-containing protein 2 (KBTB2) from Mus musculus (Mouse).